A 157-amino-acid polypeptide reads, in one-letter code: Ribosome maturation factor RimP (157 aa).

The protein belongs to the RimP family.

The protein resides in the cytoplasm. Functionally, required for maturation of 30S ribosomal subunits. This chain is Ribosome maturation factor RimP, found in Lactococcus lactis subsp. lactis (strain IL1403) (Streptococcus lactis).